An 830-amino-acid chain; its full sequence is Prolactin receptor (830 aa).

An N-terminal signal peptide occupies residues 1–23; that stretch reads MKQKLRSSVQIILLFALTAVGLT. Over 24–439 the chain is Extracellular; that stretch reads GQSYPGKPKI…QIPTDFRIKD (416 aa). 4 Fibronectin type-III domains span residues 30-128, 129-228, 231-331, and 333-434; these read KPKI…VQPD, APVN…IPNG, PPEK…IVQT, and PPVN…IPTD. A disulfide bridge links Cys36 with Cys46. An N-linked (GlcNAc...) asparagine glycan is attached at Asn59. Cysteines 75 and 86 form a disulfide. N-linked (GlcNAc...) asparagine glycosylation is found at Asn91, Asn100, Asn112, Asn132, Asn263, Asn304, Asn316, and Asn336. The Zn(2+) site is built by Asp415 and His417. The WSXWS motif signature appears at 420 to 424; it reads WSEWS. A helical transmembrane segment spans residues 440–460; that stretch reads MVVWIIVGVLSSLICLVMSWT. The Cytoplasmic segment spans residues 461 to 830; that stretch reads MVLKGYRMIA…DPSSFIPAFK (370 aa). The short motif at 472 to 480 is the Box 1 motif element; the sequence is ILPPVPGPK.

Belongs to the type I cytokine receptor family. Type 1 subfamily.

The protein localises to the membrane. This is a receptor for the anterior pituitary hormone prolactin. This chain is Prolactin receptor (PRLR), found in Columba livia (Rock dove).